The primary structure comprises 425 residues: Monoacylglycerol lipase ABHD2 (425 aa).

Over 1–9 (MNAMLETPE) the chain is Cytoplasmic. A helical; Signal-anchor for type II membrane protein membrane pass occupies residues 10–30 (LPAVFDGVKLAAVAAVLYVIV). Residues 31–425 (RCLNLKSPTA…DTEQVEADLE (395 aa)) lie on the Extracellular side of the membrane. Residues 128 to 382 (MVICPGIANH…HGGHLGFFEG (255 aa)) enclose the AB hydrolase-1 domain. An N-linked (GlcNAc...) asparagine glycan is attached at Asn136. Ser207 acts as the Nucleophile in catalysis. Catalysis depends on charge relay system residues Asp345 and His376. A glycan (N-linked (GlcNAc...) asparagine) is linked at Asn410.

This sequence belongs to the AB hydrolase superfamily. AB hydrolase 4 family.

Its subcellular location is the cell membrane. It catalyses the reaction Hydrolyzes glycerol monoesters of long-chain fatty acids.. It carries out the reaction an acetyl ester + H2O = an aliphatic alcohol + acetate + H(+). The enzyme catalyses a triacylglycerol + H2O = a diacylglycerol + a fatty acid + H(+). The catalysed reaction is 2-(5Z,8Z,11Z,14Z-eicosatetraenoyl)-glycerol + H2O = glycerol + (5Z,8Z,11Z,14Z)-eicosatetraenoate + H(+). It catalyses the reaction a butanoate ester + H2O = an aliphatic alcohol + butanoate + H(+). It carries out the reaction hexadecanoate ester + H2O = an aliphatic alcohol + hexadecanoate + H(+). Its activity is regulated as follows. Acylglycerol lipase activity is activated upon binding to progesterone. In terms of biological role, progesterone-dependent acylglycerol lipase that catalyzes hydrolysis of endocannabinoid arachidonoylglycerol (AG) from cell membrane. Acts as a progesterone receptor: progesterone-binding activates the acylglycerol lipase activity, mediating degradation of 1-arachidonoylglycerol (1AG) and 2-arachidonoylglycerol (2AG) to glycerol and arachidonic acid (AA). Also displays an ester hydrolase activity against acetyl ester, butanoate ester and hexadecanoate ester. Plays a key role in sperm capacitation in response to progesterone by mediating degradation of 2AG, an inhibitor of the sperm calcium channel CatSper, leading to calcium influx via CatSper and sperm activation. May also play a role in smooth muscle cells migration. The chain is Monoacylglycerol lipase ABHD2 (ABHD2) from Macaca fascicularis (Crab-eating macaque).